Here is a 340-residue protein sequence, read N- to C-terminus: MVDPIVTKNWRDLIKPRGLVVDQDSLSNTYGKFVAEPLERGFGITLGNSLRRVLLSSLQGAAITSVKVEGVEHEFMTIPEVAEDVTDIILNLKEVLLQIHTNDVKTIRIEADGPKEIKAGDLITDAQVEVLNPGHHILTISEGGRVRAEMTARRGRGYVPAERNKIPGSPIGTIPIDALFSPIRKVNYQVTNARVGQQTDYDKLTLEVWTDGSVAPADAVAFAAKIVKEQLSIFINFDEAEEPAEEIKPVEEQKLNENLFRSVDELELSVRSANCLQNANIKTIGDLVQKTEAEMLKTKNFGRKSLKEIKEILAEMGLSLGMKLENWPPKAAPQGGAPKV.

An alpha N-terminal domain (alpha-NTD) region spans residues 1–238 (MVDPIVTKNW…EQLSIFINFD (238 aa)). Residues 255 to 340 (LNENLFRSVD…AAPQGGAPKV (86 aa)) form an alpha C-terminal domain (alpha-CTD) region.

This sequence belongs to the RNA polymerase alpha chain family. In terms of assembly, homodimer. The RNAP catalytic core consists of 2 alpha, 1 beta, 1 beta' and 1 omega subunit. When a sigma factor is associated with the core the holoenzyme is formed, which can initiate transcription.

It catalyses the reaction RNA(n) + a ribonucleoside 5'-triphosphate = RNA(n+1) + diphosphate. Its function is as follows. DNA-dependent RNA polymerase catalyzes the transcription of DNA into RNA using the four ribonucleoside triphosphates as substrates. The sequence is that of DNA-directed RNA polymerase subunit alpha from Anaeromyxobacter dehalogenans (strain 2CP-1 / ATCC BAA-258).